Here is a 925-residue protein sequence, read N- to C-terminus: Neuronal PAS domain-containing protein 3 (925 aa).

One can recognise a bHLH domain in the interval 58–111 (LRKEKSRDAARSRRGKENFEFYELAKLLPLPAAITSQLDKASIIRLTISYLKMR). A DNA-binding region spans residues 60–71 (KEKSRDAARSRR). 2 disordered regions span residues 119–138 (PPWN…KGAQ) and 219–257 (LPPG…SPSL). The region spanning 152-222 (EAHLGSHILQ…EQLGMKLPPG (71 aa)) is the PAS 1 domain. Over residues 234 to 256 (AASSASSSSQSETPEPVETTSPS) the composition is skewed to low complexity. The 71-residue stretch at 324–394 (PPPTINEVRI…HSHLDLLNKG (71 aa)) folds into the PAS 2 domain. Positions 398–441 (TKYYRWMQKNGGYIWIQSSATIAINAKNANEKNIIWVNYLLSNP) constitute a PAC domain. 3 disordered regions span residues 457-555 (PEKA…FGAL), 576-645 (PCES…SSPH), and 664-774 (NESS…GASN). Composition is skewed to basic and acidic residues over residues 484 to 493 (ENSKSDEKGN) and 529 to 549 (DSRD…KAAE). The segment covering 601 to 622 (KHQKRKRRRKRQKGGSASRRRL) has biased composition (basic residues). Residues 680 to 690 (NESPYSMTKPP) show a composition bias toward polar residues. Composition is skewed to gly residues over residues 700-710 (GQGGSIGGGGA) and 760-771 (GGGAGSGGGGPG).

Efficient DNA binding requires dimerization with another bHLH protein. Interacts with ARNT; forms a heterodimer that binds core DNA sequence 5'-[AG]CGTG-3' within the hypoxia response element (HRE) of target gene promoters. In terms of tissue distribution, detected exclusively in adult brain in inhibitory interneurons.

The protein localises to the nucleus. May play a broad role in neurogenesis. May control regulatory pathways relevant to schizophrenia and to psychotic illness. This is Neuronal PAS domain-containing protein 3 (Npas3) from Mus musculus (Mouse).